The chain runs to 565 residues: Transcription factor asqA (565 aa).

A fungal transcription factor domain region spans residues 204–273 (MDTAMAQAVR…HSMPALCIDS (70 aa)).

Its subcellular location is the nucleus. In terms of biological role, transcription factor that regulates specifically the 4'-methoxyviridicatin/aspoquinolone biosynthesis cluster. In Emericella nidulans (strain FGSC A4 / ATCC 38163 / CBS 112.46 / NRRL 194 / M139) (Aspergillus nidulans), this protein is Transcription factor asqA.